The sequence spans 147 residues: Leghemoglobin-1 (147 aa).

The 146-residue stretch at 2 to 147 (SFTDKQEALV…LATAIKKAMS (146 aa)) folds into the Globin domain. Residues Y25 and Y30 each carry the nitrated tyrosine modification. S45 provides a ligand contact to heme b. S45 carries the phosphoserine modification. Residue H62 participates in O2 binding. Heme b is bound by residues K65, H94, and K97. Y135 carries the nitrated tyrosine modification.

This sequence belongs to the plant globin family. As to quaternary structure, monomer. Post-translationally, nitrated in effective nodules and particularly in hypoxic conditions; this mechanism may play a protective role in the symbiosis by buffering toxic peroxynitrite NO(2)(-). Nitration level decrease during nodule senescence. In terms of processing, phosphorylation at Ser-45 disrupts the molecular environment of its porphyrin ring oxygen binding pocket, thus leading to a reduced oxygen consumption and to the delivery of oxygen O(2) to symbiosomes. Root nodules.

It localises to the cytoplasm. It is found in the cytosol. The protein localises to the nucleus. Functionally, leghemoglobin that reversibly binds oxygen O(2) through a pentacoordinated heme iron. In root nodules, facilitates the diffusion of oxygen to the bacteroids while preventing the bacterial nitrogenase from being inactivated by buffering dioxygen, nitric oxide and carbon monoxide, and promoting the formation of reactive oxygen species (ROS, e.g. H(2)O(2)). This role is essential for symbiotic nitrogen fixation (SNF). The polypeptide is Leghemoglobin-1 (Medicago sativa (Alfalfa)).